Consider the following 828-residue polypeptide: DNA gyrase subunit A (828 aa).

One can recognise a Topo IIA-type catalytic domain in the interval 32 to 497 (LPDVRDGLKP…EVLSLEDEDL (466 aa)). The O-(5'-phospho-DNA)-tyrosine intermediate role is filled by tyrosine 120. The GyrA-box signature appears at 524–530 (QKRGGRG).

The protein belongs to the type II topoisomerase GyrA/ParC subunit family. As to quaternary structure, heterotetramer, composed of two GyrA and two GyrB chains. In the heterotetramer, GyrA contains the active site tyrosine that forms a transient covalent intermediate with DNA, while GyrB binds cofactors and catalyzes ATP hydrolysis.

The protein resides in the cytoplasm. It catalyses the reaction ATP-dependent breakage, passage and rejoining of double-stranded DNA.. Its function is as follows. A type II topoisomerase that negatively supercoils closed circular double-stranded (ds) DNA in an ATP-dependent manner to modulate DNA topology and maintain chromosomes in an underwound state. Negative supercoiling favors strand separation, and DNA replication, transcription, recombination and repair, all of which involve strand separation. Also able to catalyze the interconversion of other topological isomers of dsDNA rings, including catenanes and knotted rings. Type II topoisomerases break and join 2 DNA strands simultaneously in an ATP-dependent manner. This chain is DNA gyrase subunit A, found in Streptococcus pyogenes serotype M18 (strain MGAS8232).